A 195-amino-acid polypeptide reads, in one-letter code: Interferon tau (195 aa).

The first 23 residues, 1 to 23 (MAFMLSLLMALVLVSYGLGGSLG), serve as a signal peptide directing secretion. 2 disulfide bridges follow: cysteine 52–cysteine 162 and cysteine 87–cysteine 109.

Belongs to the alpha/beta interferon family. IFN-alphaII subfamily.

The protein resides in the secreted. Paracrine hormone primarily responsible for maternal recognition of pregnancy. Interacts with endometrial receptors, probably type I interferon receptors, and blocks estrogen receptor expression, preventing the estrogen-induced increase in oxytocin receptor expression in the endometrium. This results in the suppression of the pulsatile endometrial release of the luteolytic hormone prostaglandin F2-alpha, hindering the regression of the corpus luteum (luteolysis) and therefore a return to ovarian cyclicity. This, and a possible direct effect of IFN-tau on prostaglandin synthesis, leads in turn to continued ovarian progesterone secretion, which stimulates the secretion by the endometrium of the nutrients required for the growth of the conceptus. In summary, displays particularly high antiviral and antiproliferative potency concurrently with particular weak cytotoxicity, high antiluteolytic activity and immunomodulatory properties. In contrast with other IFNs, IFN-tau is not virally inducible. This Giraffa camelopardalis (Giraffe) protein is Interferon tau (IFNT).